Reading from the N-terminus, the 63-residue chain is Putative alpha-neurotoxin RjAa9 (63 aa).

The 60-residue stretch at 1–60 (KEGYPVDWGNCKYECMSDEYCKDLCADRKATSGYCYKLNWSCYCKGLPDDSPIKTPGKCR) folds into the LCN-type CS-alpha/beta domain. 4 disulfides stabilise this stretch: Cys-11–Cys-59, Cys-15–Cys-35, Cys-21–Cys-42, and Cys-25–Cys-44.

It belongs to the long (4 C-C) scorpion toxin superfamily. Sodium channel inhibitor family. Alpha subfamily. Expressed by the venom gland.

It localises to the secreted. Alpha toxins bind voltage-independently at site-3 of sodium channels (Nav) and inhibits the inactivation of the activated channels, thereby blocking neuronal transmission. This Rhopalurus junceus (Caribbean blue scorpion) protein is Putative alpha-neurotoxin RjAa9.